The sequence spans 589 residues: Serine/threonine-protein kinase STE7 homolog (589 aa).

Basic and acidic residues predominate over residues 1–18; sequence MTRTTRIDTQEATKHKDL. Disordered stretches follow at residues 1 to 162 and 185 to 233; these read MTRT…DPDN and RQHY…ASSQ. Residues 24–33 show a composition bias toward low complexity; sequence PLSLSSNPNP. Polar residues predominate over residues 57-69; that stretch reads VKSTSGSLRSSDM. Positions 92-121 are enriched in low complexity; the sequence is PTASSSATSTPTSNITGSSSASSIQFAQKS. 2 stretches are compositionally biased toward polar residues: residues 127-136 and 144-162; these read IVSQTLSRPS and SGYS…DPDN. The segment covering 185 to 203 has biased composition (basic residues); it reads RQHYQNSHHHLPTTNRKRQ. Positions 206–220 are enriched in low complexity; sequence ISSISPTKSSAASSS. Residues 221 to 233 show a composition bias toward polar residues; it reads LEPQIQSLPASSQ. In terms of domain architecture, Protein kinase spans 249–565; the sequence is LLTLKQLGSG…QLLEDKEHFF (317 aa). ATP-binding positions include 255–263 and lysine 278; that span reads LGSGNSGSV. The active-site Proton acceptor is aspartate 374. Phosphoserine is present on serine 402. Position 408 is a phosphothreonine (threonine 408). The interval 473 to 499 is disordered; sequence IAAERNGQNSPSRSRKNKQKGNGYNSY.

The protein belongs to the protein kinase superfamily. STE Ser/Thr protein kinase family. MAP kinase kinase subfamily.

It carries out the reaction L-seryl-[protein] + ATP = O-phospho-L-seryl-[protein] + ADP + H(+). The catalysed reaction is L-threonyl-[protein] + ATP = O-phospho-L-threonyl-[protein] + ADP + H(+). It catalyses the reaction L-tyrosyl-[protein] + ATP = O-phospho-L-tyrosyl-[protein] + ADP + H(+). This Candida albicans (strain SC5314 / ATCC MYA-2876) (Yeast) protein is Serine/threonine-protein kinase STE7 homolog (HST7).